The sequence spans 283 residues: Phosphatidylserine decarboxylase proenzyme (283 aa).

Active-site charge relay system; for autoendoproteolytic cleavage activity residues include aspartate 89, histidine 146, and serine 249. Serine 249 serves as the catalytic Schiff-base intermediate with substrate; via pyruvic acid; for decarboxylase activity. Serine 249 bears the Pyruvic acid (Ser); by autocatalysis mark.

This sequence belongs to the phosphatidylserine decarboxylase family. PSD-B subfamily. Prokaryotic type I sub-subfamily. In terms of assembly, heterodimer of a large membrane-associated beta subunit and a small pyruvoyl-containing alpha subunit. Requires pyruvate as cofactor. Is synthesized initially as an inactive proenzyme. Formation of the active enzyme involves a self-maturation process in which the active site pyruvoyl group is generated from an internal serine residue via an autocatalytic post-translational modification. Two non-identical subunits are generated from the proenzyme in this reaction, and the pyruvate is formed at the N-terminus of the alpha chain, which is derived from the carboxyl end of the proenzyme. The autoendoproteolytic cleavage occurs by a canonical serine protease mechanism, in which the side chain hydroxyl group of the serine supplies its oxygen atom to form the C-terminus of the beta chain, while the remainder of the serine residue undergoes an oxidative deamination to produce ammonia and the pyruvoyl prosthetic group on the alpha chain. During this reaction, the Ser that is part of the protease active site of the proenzyme becomes the pyruvoyl prosthetic group, which constitutes an essential element of the active site of the mature decarboxylase.

It localises to the cell membrane. It catalyses the reaction a 1,2-diacyl-sn-glycero-3-phospho-L-serine + H(+) = a 1,2-diacyl-sn-glycero-3-phosphoethanolamine + CO2. It functions in the pathway phospholipid metabolism; phosphatidylethanolamine biosynthesis; phosphatidylethanolamine from CDP-diacylglycerol: step 2/2. In terms of biological role, catalyzes the formation of phosphatidylethanolamine (PtdEtn) from phosphatidylserine (PtdSer). In Legionella pneumophila subsp. pneumophila (strain Philadelphia 1 / ATCC 33152 / DSM 7513), this protein is Phosphatidylserine decarboxylase proenzyme.